The following is a 430-amino-acid chain: UDP-N-acetylglucosamine 1-carboxyvinyltransferase (430 aa).

22–23 provides a ligand contact to phosphoenolpyruvate; that stretch reads KN. A UDP-N-acetyl-alpha-D-glucosamine-binding site is contributed by Arg102. Cys126 functions as the Proton donor in the catalytic mechanism. A 2-(S-cysteinyl)pyruvic acid O-phosphothioketal modification is found at Cys126. Residues 131–135, 172–175, Asp317, and Ile339 contribute to the UDP-N-acetyl-alpha-D-glucosamine site; these read RPVDL and KVSV.

This sequence belongs to the EPSP synthase family. MurA subfamily.

It localises to the cytoplasm. It catalyses the reaction phosphoenolpyruvate + UDP-N-acetyl-alpha-D-glucosamine = UDP-N-acetyl-3-O-(1-carboxyvinyl)-alpha-D-glucosamine + phosphate. It functions in the pathway cell wall biogenesis; peptidoglycan biosynthesis. Functionally, cell wall formation. Adds enolpyruvyl to UDP-N-acetylglucosamine. The polypeptide is UDP-N-acetylglucosamine 1-carboxyvinyltransferase (Allorhizobium ampelinum (strain ATCC BAA-846 / DSM 112012 / S4) (Agrobacterium vitis (strain S4))).